A 226-amino-acid chain; its full sequence is Cytidylate kinase (226 aa).

Residue 10–18 (GPASSGKST) participates in ATP binding.

This sequence belongs to the cytidylate kinase family. Type 1 subfamily.

The protein localises to the cytoplasm. It catalyses the reaction CMP + ATP = CDP + ADP. It carries out the reaction dCMP + ATP = dCDP + ADP. This is Cytidylate kinase from Streptococcus pyogenes serotype M1.